Reading from the N-terminus, the 240-residue chain is Phosphatidylserine decarboxylase proenzyme (240 aa).

S209 functions as the Schiff-base intermediate with substrate; via pyruvic acid in the catalytic mechanism. Position 209 is a pyruvic acid (Ser); by autocatalysis (S209).

This sequence belongs to the phosphatidylserine decarboxylase family. PSD-A subfamily. As to quaternary structure, heterodimer of a large membrane-associated beta subunit and a small pyruvoyl-containing alpha subunit. It depends on pyruvate as a cofactor. Post-translationally, is synthesized initially as an inactive proenzyme. Formation of the active enzyme involves a self-maturation process in which the active site pyruvoyl group is generated from an internal serine residue via an autocatalytic post-translational modification. Two non-identical subunits are generated from the proenzyme in this reaction, and the pyruvate is formed at the N-terminus of the alpha chain, which is derived from the carboxyl end of the proenzyme. The post-translation cleavage follows an unusual pathway, termed non-hydrolytic serinolysis, in which the side chain hydroxyl group of the serine supplies its oxygen atom to form the C-terminus of the beta chain, while the remainder of the serine residue undergoes an oxidative deamination to produce ammonia and the pyruvoyl prosthetic group on the alpha chain.

It is found in the cell membrane. It carries out the reaction a 1,2-diacyl-sn-glycero-3-phospho-L-serine + H(+) = a 1,2-diacyl-sn-glycero-3-phosphoethanolamine + CO2. The protein operates within phospholipid metabolism; phosphatidylethanolamine biosynthesis; phosphatidylethanolamine from CDP-diacylglycerol: step 2/2. Functionally, catalyzes the formation of phosphatidylethanolamine (PtdEtn) from phosphatidylserine (PtdSer). The chain is Phosphatidylserine decarboxylase proenzyme from Mycobacterium avium (strain 104).